The primary structure comprises 617 residues: 1-deoxy-D-xylulose-5-phosphate synthase (617 aa).

Thiamine diphosphate contacts are provided by residues H77 and 118–120 (GHS). D149 serves as a coordination point for Mg(2+). Thiamine diphosphate contacts are provided by residues 150–151 (GA), N178, Y286, and E367. N178 contacts Mg(2+).

It belongs to the transketolase family. DXPS subfamily. As to quaternary structure, homodimer. Requires Mg(2+) as cofactor. It depends on thiamine diphosphate as a cofactor.

It carries out the reaction D-glyceraldehyde 3-phosphate + pyruvate + H(+) = 1-deoxy-D-xylulose 5-phosphate + CO2. It functions in the pathway metabolic intermediate biosynthesis; 1-deoxy-D-xylulose 5-phosphate biosynthesis; 1-deoxy-D-xylulose 5-phosphate from D-glyceraldehyde 3-phosphate and pyruvate: step 1/1. In terms of biological role, catalyzes the acyloin condensation reaction between C atoms 2 and 3 of pyruvate and glyceraldehyde 3-phosphate to yield 1-deoxy-D-xylulose-5-phosphate (DXP). This is 1-deoxy-D-xylulose-5-phosphate synthase from Actinobacillus pleuropneumoniae serotype 5b (strain L20).